We begin with the raw amino-acid sequence, 945 residues long: Isoleucine--tRNA ligase (945 aa).

The 'HIGH' region signature appears at Pro-66–His-76. Glu-581 contributes to the L-isoleucyl-5'-AMP binding site. Residues Lys-622 to Ser-626 carry the 'KMSKS' region motif. Lys-625 lines the ATP pocket. Positions 908, 911, 928, and 931 each coordinate Zn(2+).

It belongs to the class-I aminoacyl-tRNA synthetase family. IleS type 1 subfamily. As to quaternary structure, monomer. Zn(2+) is required as a cofactor.

Its subcellular location is the cytoplasm. It carries out the reaction tRNA(Ile) + L-isoleucine + ATP = L-isoleucyl-tRNA(Ile) + AMP + diphosphate. Catalyzes the attachment of isoleucine to tRNA(Ile). As IleRS can inadvertently accommodate and process structurally similar amino acids such as valine, to avoid such errors it has two additional distinct tRNA(Ile)-dependent editing activities. One activity is designated as 'pretransfer' editing and involves the hydrolysis of activated Val-AMP. The other activity is designated 'posttransfer' editing and involves deacylation of mischarged Val-tRNA(Ile). The protein is Isoleucine--tRNA ligase of Burkholderia lata (strain ATCC 17760 / DSM 23089 / LMG 22485 / NCIMB 9086 / R18194 / 383).